The primary structure comprises 228 residues: Eukaryotic translation initiation factor 4E-1 (228 aa).

EIF4G-binding stretches follow at residues 53-56 and 63-99; these read HLLE and FDTP…NNIH. MRNA-binding positions include 71–76, Lys103, and 121–122; these read KQDDWG and WE. An intrachain disulfide couples Cys126 to Cys164. The tract at residues 147–156 is EIF4G-binding; sequence YTLLAMIGEQ. MRNA is bound by residues 171-176 and 216-220; these read RGRAEK and RKLDR.

This sequence belongs to the eukaryotic initiation factor 4E family. In terms of assembly, EIF4F is a multi-subunit complex, the composition of which varies with external and internal environmental conditions. It is composed of at least EIF4A, EIF4E and EIF4G. EIF4E is also known to interact with other partners. In higher plants two isoforms of EIF4F have been identified, named isoform EIF4F and isoform EIF(iso)4F. Isoform EIF4F has subunits p220 and p26, whereas isoform EIF(iso)4F has subunits p82 and p28. As to quaternary structure, (Microbial infection) Interacts with potyvirus viral genome-linked protein (VPg); this interaction is possible in susceptible hosts but impaired in resistant plants. In terms of processing, according to the redox status, the Cys-126-Cys-164 disulfide bridge may have a role in regulating protein function by affecting its ability to bind capped mRNA.

Its subcellular location is the nucleus. It is found in the cytoplasm. In terms of biological role, component of the protein complex eIF4F, which is involved in the recognition of the mRNA cap, ATP-dependent unwinding of 5'-terminal secondary structure and recruitment of mRNA to the ribosome. Recognizes and binds the 7-methylguanosine-containing mRNA cap during an early step in the initiation of protein synthesis and facilitates ribosome binding by inducing the unwinding of the mRNAs secondary structures. Key component of recessive resistance to potyviruses. (Microbial infection) Susceptibility host factor required for viral infection by recruiting viral RNAs to the host ribosomal complex via an interaction with viral genome-linked protein (VPg). Also seems to be involved in virus movement from cell-to-cell. The sequence is that of Eukaryotic translation initiation factor 4E-1 from Pisum sativum (Garden pea).